Reading from the N-terminus, the 378-residue chain is MKILVDENMPYARELFSRLGEVKAVPGRPIPVVQLDDADALMVRSVTKVNESLLAGKPIKFVGTATAGTDHVDEVWLKQAGIGFSAAPGCNAIAVVEYVFSSLLMLAERDGFSLHERTVGIVGVGNVGRRLQARLEVLGIKTLLCDPPRADRGDEGDFRSLDELVQHADILTFHTPLFKDGPYKTLHLADEKLIRSLKPGAILINACRGAVVDNTALLTCLNEGQKLSVVLDVWEGEPELNVELLKKVDIGTPHIAGYTLEGKARGTTQVFEAYSKFIGHEQHVALDTLLPAPEFGRITLHGPLDQPTLKRLVHLVYDVRRDDAPLRKVAGIPGEFDKLRKNYLERREWSSLYVICDDASAASLLCKLGFNAVHHPAR.

Residues Ser-45 and Thr-66 each contribute to the substrate site. The NAD(+) site is built by Asp-146 and Thr-175. Arg-208 is an active-site residue. Asp-232 contributes to the NAD(+) binding site. Residue Glu-237 is part of the active site. His-254 functions as the Proton donor in the catalytic mechanism. Gly-257 provides a ligand contact to NAD(+). Substrate is bound at residue Tyr-258.

This sequence belongs to the D-isomer specific 2-hydroxyacid dehydrogenase family. PdxB subfamily. In terms of assembly, homodimer.

It localises to the cytoplasm. The enzyme catalyses 4-phospho-D-erythronate + NAD(+) = (R)-3-hydroxy-2-oxo-4-phosphooxybutanoate + NADH + H(+). Its pathway is cofactor biosynthesis; pyridoxine 5'-phosphate biosynthesis; pyridoxine 5'-phosphate from D-erythrose 4-phosphate: step 2/5. Functionally, catalyzes the oxidation of erythronate-4-phosphate to 3-hydroxy-2-oxo-4-phosphonooxybutanoate. The polypeptide is Erythronate-4-phosphate dehydrogenase (Escherichia coli O139:H28 (strain E24377A / ETEC)).